The primary structure comprises 357 residues: tRNA pseudouridine synthase B (357 aa).

Residue Asp-42 is the Nucleophile of the active site.

The protein belongs to the pseudouridine synthase TruB family. Type 1 subfamily.

It carries out the reaction uridine(55) in tRNA = pseudouridine(55) in tRNA. Responsible for synthesis of pseudouridine from uracil-55 in the psi GC loop of transfer RNAs. The sequence is that of tRNA pseudouridine synthase B from Treponema denticola (strain ATCC 35405 / DSM 14222 / CIP 103919 / JCM 8153 / KCTC 15104).